Reading from the N-terminus, the 85-residue chain is Small ribosomal subunit protein uS17 (85 aa).

This sequence belongs to the universal ribosomal protein uS17 family. As to quaternary structure, part of the 30S ribosomal subunit.

Functionally, one of the primary rRNA binding proteins, it binds specifically to the 5'-end of 16S ribosomal RNA. The chain is Small ribosomal subunit protein uS17 from Lachnoclostridium phytofermentans (strain ATCC 700394 / DSM 18823 / ISDg) (Clostridium phytofermentans).